A 1499-amino-acid polypeptide reads, in one-letter code: Pleiotropic ABC efflux transporter of multiple drugs CDR1 (1499 aa).

The segment covering 1 to 11 (MSLASDKKDAD) has biased composition (basic and acidic residues). Residues 1 to 29 (MSLASDKKDADVASTTTTAQDDDNLSTYH) are disordered. Residues asparagine 24, asparagine 96, and asparagine 99 are each glycosylated (N-linked (GlcNAc...) asparagine). One can recognise an ABC transporter 1 domain in the interval 146 to 399 (VYNTVVPSTA…FQKMGYVSPE (254 aa)). Serine 307 bears the Phosphoserine mark. Asparagine 323 carries N-linked (GlcNAc...) asparagine glycosylation. Residue serine 484 is modified to Phosphoserine. Residues 510–530 (GVTLFMVIGNSSMAFILGSMF) form a helical membrane-spanning segment. Asparagine 537 is a glycosylation site (N-linked (GlcNAc...) asparagine). The next 5 membrane-spanning stretches (helical) occupy residues 548-568 (AMFFAVLFNAFSSLLEIFSLF), 597-617 (VPAKLITAVCFNIIYYFLVNF), 622-642 (GVFFFYFLINIVAVFAMSHLF), 654-674 (AAMVPASMLLLGLSMYSGFAI), and 763-783 (GFGIGLAYVIFFLVLYLILCE). A glycan (N-linked (GlcNAc...) asparagine) is linked at asparagine 813. Residues 857–1099 (FHWRNLCYDV…TMIDYFESHG (243 aa)) form the ABC transporter 2 domain. ATP is bound at residue 893-900 (GASGAGKT). The N-linked (GlcNAc...) asparagine glycan is linked to asparagine 1159. Transmembrane regions (helical) follow at residues 1193–1213 (YLWSKFFLTIFNNIFIGFTFF), 1228–1248 (AVFMFTVIFNPLLQQYLPSFV), and 1278–1298 (IPWNILAGTVAFVIYYYAIGF). The N-linked (GlcNAc...) asparagine glycan is linked to asparagine 1301. A run of 2 helical transmembrane segments spans residues 1314–1334 (LFWLFSCAFYVYIGSLALFCI) and 1342–1362 (AAANMASLMFTLSLSFCGVLV). Asparagine 1412 is a glycosylation site (N-linked (GlcNAc...) asparagine). A helical membrane pass occupies residues 1466 to 1486 (WGIFICYIAFNYIAGIFLYWL).

It belongs to the ABC transporter superfamily. In terms of processing, phosphorylated at Ser-307 and Ser-484. Ser-307 and Ser-484 are dephosphorylated on glucose depletion and independently rephosphorylated during glucose exposure or under stress.

Its subcellular location is the cell membrane. With respect to regulation, inhibited by clorgyline. Inhibited by RC21v3, a 4-methoxy-2,3,6-trimethylbenzenesulphonyl derivative of the D-octapeptide D-FFKWQRRR, via the interaction with the ectodomain. FK506, enniatin, milbemycin alpha-11, and milbemycin beta-9 also inhibit CDR1 activity. Inhibited by milbemycin A3/A4 oxim derivatives. Its function is as follows. Pleiotropic ABC efflux transporter that transports and confers resistance to structurally and functionally unrelated compounds including rhodamine 6G, Nile red, caspofungin, cycloheximide, or azoles such as fluconazole, itraconazole, ketoconazole, posaconazole, voriconazole, and isavuconazole. Chlorbromuron, itraconazole, yohimbine, ketoconazole, miconazole, clotrimazole, DE-11, tamoxifen, quinidine, verapamil can compete for rhodamine 6G's binding site(s) while compounds such as propanil, chloramphenicol, benomyl, voriconazole, tritylimidazole, ketoconazole, miconazole, tamoxifen, gefitinib shared binding site(s) with fluconazole. Nile red mediated efflux appears to be relatively more specific since only five compounds such as ZW3-12, rhodamine 123, miconazole, clotrimazole, and itraconazole can inhibit its accumulation. Does not use as substrates 4-nitroquinoline 1-oxide (4-NQO) and disulfiram. Does not play a role in the azole resistance in mature biofilms. The protein is Pleiotropic ABC efflux transporter of multiple drugs CDR1 of Candida glabrata (strain ATCC 2001 / BCRC 20586 / JCM 3761 / NBRC 0622 / NRRL Y-65 / CBS 138) (Yeast).